Consider the following 37-residue polypeptide: Cytochrome b6-f complex subunit 5 (37 aa).

Residues 5-25 traverse the membrane as a helical segment; it reads LLFGIVLGLIPVTLTGLFVAA.

This sequence belongs to the PetG family. In terms of assembly, the 4 large subunits of the cytochrome b6-f complex are cytochrome b6, subunit IV (17 kDa polypeptide, PetD), cytochrome f and the Rieske protein, while the 4 small subunits are PetG, PetL, PetM and PetN. The complex functions as a dimer.

The protein resides in the plastid. Its subcellular location is the chloroplast thylakoid membrane. Its function is as follows. Component of the cytochrome b6-f complex, which mediates electron transfer between photosystem II (PSII) and photosystem I (PSI), cyclic electron flow around PSI, and state transitions. PetG is required for either the stability or assembly of the cytochrome b6-f complex. This is Cytochrome b6-f complex subunit 5 from Guillardia theta (Cryptophyte).